The following is a 311-amino-acid chain: Aspartate carbamoyltransferase catalytic subunit (311 aa).

Residues arginine 55 and threonine 56 each contribute to the carbamoyl phosphate site. Lysine 85 contributes to the L-aspartate binding site. Positions 106, 135, and 138 each coordinate carbamoyl phosphate. Residues arginine 168 and arginine 230 each coordinate L-aspartate. Carbamoyl phosphate-binding residues include leucine 268 and proline 269.

Belongs to the aspartate/ornithine carbamoyltransferase superfamily. ATCase family. As to quaternary structure, heterododecamer (2C3:3R2) of six catalytic PyrB chains organized as two trimers (C3), and six regulatory PyrI chains organized as three dimers (R2).

It catalyses the reaction carbamoyl phosphate + L-aspartate = N-carbamoyl-L-aspartate + phosphate + H(+). It participates in pyrimidine metabolism; UMP biosynthesis via de novo pathway; (S)-dihydroorotate from bicarbonate: step 2/3. Its function is as follows. Catalyzes the condensation of carbamoyl phosphate and aspartate to form carbamoyl aspartate and inorganic phosphate, the committed step in the de novo pyrimidine nucleotide biosynthesis pathway. The polypeptide is Aspartate carbamoyltransferase catalytic subunit (Salmonella dublin (strain CT_02021853)).